The chain runs to 440 residues: Glycerol-3-phosphate dehydrogenase [NAD(+)] 2, mitochondrial (440 aa).

The transit peptide at M1–T16 directs the protein to the mitochondrion. A phosphoserine mark is found at S70, S72, and S75. Residues G90–G95, F122, and F178 contribute to the NAD(+) site. A substrate-binding site is contributed by K201. Position 234 (A234) interacts with NAD(+). Catalysis depends on K294, which acts as the Proton acceptor. The NAD(+) site is built by R359 and Q388. R359 to N360 contacts substrate.

This sequence belongs to the NAD-dependent glycerol-3-phosphate dehydrogenase family.

It is found in the cytoplasm. The protein resides in the mitochondrion. It carries out the reaction sn-glycerol 3-phosphate + NAD(+) = dihydroxyacetone phosphate + NADH + H(+). Its function is as follows. Catalyzes the production of glycerol under anaerobic growth conditions. Glycerol production serves as a redox sink by consuming the excess cytosolic NADH during anaerobic metabolism. This is Glycerol-3-phosphate dehydrogenase [NAD(+)] 2, mitochondrial from Saccharomyces cerevisiae (strain ATCC 204508 / S288c) (Baker's yeast).